A 284-amino-acid polypeptide reads, in one-letter code: Halorhodopsin (284 aa).

The Extracellular portion of the chain corresponds to 1–30 (MIETAAADILAGGMVPLEMTQTQIFEAVQS). A helical transmembrane segment spans residues 31 to 56 (DTLLASSLWINIALAGLSILLFVYMG). The Cytoplasmic segment spans residues 57–62 (RNVEDP). Residues 63–86 (RAQLIFVATLMVPLVSISSYTGLV) traverse the membrane as a helical segment. The Extracellular segment spans residues 87 to 110 (SGLTVSFLEMPAGHALAGQEVLTP). Residues 111-132 (WGRYLTWALSTPMILIAVGLLA) traverse the membrane as a helical segment. Topologically, residues 133–135 (GSN) are cytoplasmic. Residues 136–159 (TTKLFTAVVADIGMCVTGLAAALT) traverse the membrane as a helical segment. Over 160-162 (TSS) the chain is Extracellular. The helical transmembrane segment at 163–185 (YLLRWVWYAISCAFFVVVLYILL) threads the bilayer. Residues 186-197 (AEWAEDAEIAGT) are Cytoplasmic-facing. A helical transmembrane segment spans residues 198 to 221 (ADIFNTLKVLTVVLWLGYPIFWAL). The Extracellular segment spans residues 222–230 (GAEGLAVLD). Residues 231–259 (VAITSWAYSGMDIVAKYLFAFLLLRWVVN) traverse the membrane as a helical segment. Residue K246 is modified to N6-(retinylidene)lysine. Topologically, residues 260–284 (NERTVADVASGLGSGSRGGAAPADD) are cytoplasmic.

This sequence belongs to the archaeal/bacterial/fungal opsin family.

The protein resides in the cell membrane. In terms of biological role, light-driven chloride pump. This Halobacterium sp. (strain SG1) protein is Halorhodopsin (hop).